Reading from the N-terminus, the 314-residue chain is tRNA dimethylallyltransferase (314 aa).

14 to 21 contributes to the ATP binding site; that stretch reads GPTASGKT. Position 16–21 (16–21) interacts with substrate; that stretch reads TASGKT. Interaction with substrate tRNA regions lie at residues 39–42, 163–167, and 245–250; these read DSAQ, QRLQR, and RCVGYR.

It belongs to the IPP transferase family. Monomer. Requires Mg(2+) as cofactor.

It carries out the reaction adenosine(37) in tRNA + dimethylallyl diphosphate = N(6)-dimethylallyladenosine(37) in tRNA + diphosphate. In terms of biological role, catalyzes the transfer of a dimethylallyl group onto the adenine at position 37 in tRNAs that read codons beginning with uridine, leading to the formation of N6-(dimethylallyl)adenosine (i(6)A). The chain is tRNA dimethylallyltransferase from Dechloromonas aromatica (strain RCB).